The sequence spans 348 residues: Protein RecA (348 aa).

71–78 (GVESSGKT) is a binding site for ATP.

The protein belongs to the RecA family.

The protein localises to the cytoplasm. In terms of biological role, can catalyze the hydrolysis of ATP in the presence of single-stranded DNA, the ATP-dependent uptake of single-stranded DNA by duplex DNA, and the ATP-dependent hybridization of homologous single-stranded DNAs. It interacts with LexA causing its activation and leading to its autocatalytic cleavage. This is Protein RecA from Aquifex pyrophilus.